Here is a 312-residue protein sequence, read N- to C-terminus: MLQYQIDRIEHQVEEDRSQSGVFLIGPLERGQATTLGNALRRVLMGGLEGSAVTAIRIAGVNHEYATVPGVREDVLDILLNCKELSVNSRSPELEIGRLVVAGPAEVTAKDLQFSSQVEVVDGNRSIATVADGYSLELEVHVERGVGYRPVDRHSEDTSAIDLLQIDAVFMPVIRVNFTIDETAVAEGGSARERLRMEIVTDGSITPDDALAQSANYLIELFQPLATVTLVEEPGIEPEPSAEAQIPLEELNLSVRAYNCLKRAQVNSVSDLMGFSYEDLLEIKNFGSKSADEVIEALERIGISIPQSRTSA.

Residues 1 to 229 (MLQYQIDRIE…ELFQPLATVT (229 aa)) are alpha N-terminal domain (alpha-NTD). The interval 246-312 (IPLEELNLSV…ISIPQSRTSA (67 aa)) is alpha C-terminal domain (alpha-CTD).

This sequence belongs to the RNA polymerase alpha chain family. In cyanobacteria the RNAP catalytic core is composed of 2 alpha, 1 beta, 1 beta', 1 gamma and 1 omega subunit. When a sigma factor is associated with the core the holoenzyme is formed, which can initiate transcription.

It carries out the reaction RNA(n) + a ribonucleoside 5'-triphosphate = RNA(n+1) + diphosphate. Its function is as follows. DNA-dependent RNA polymerase catalyzes the transcription of DNA into RNA using the four ribonucleoside triphosphates as substrates. This is DNA-directed RNA polymerase subunit alpha from Parasynechococcus marenigrum (strain WH8102).